The primary structure comprises 340 residues: Ubiquitin-like domain-containing CTD phosphatase (340 aa).

The region spanning 24–101 (LTLTVKWNGK…MTMIGTVEDD (78 aa)) is the Ubiquitin-like domain. Positions 151 to 312 (CRQGKKLLVL…VKLTQYLLTI (162 aa)) constitute an FCP1 homology domain. Positions 151 to 312 (CRQGKKLLVL…VKLTQYLLTI (162 aa)) are phosphatase. Asp161, Asp163, and Asp271 together coordinate Mg(2+).

Mg(2+) serves as cofactor.

The protein localises to the nucleus. It catalyses the reaction O-phospho-L-seryl-[protein] + H2O = L-seryl-[protein] + phosphate. The enzyme catalyses O-phospho-L-threonyl-[protein] + H2O = L-threonyl-[protein] + phosphate. In terms of biological role, dephosphorylates 26S nuclear proteasomes, thereby decreasing their proteolytic activity. The dephosphorylation may prevent assembly of the core and regulatory particles (CP and RP) into mature 26S proteasome. This chain is Ubiquitin-like domain-containing CTD phosphatase, found in Arabidopsis thaliana (Mouse-ear cress).